A 2280-amino-acid polypeptide reads, in one-letter code: Protein Ycf2 (2280 aa).

1631 to 1638 provides a ligand contact to ATP; the sequence is GSIGTGRS.

This sequence belongs to the Ycf2 family.

The protein resides in the plastid. It is found in the chloroplast stroma. Functionally, probable ATPase of unknown function. Its presence in a non-photosynthetic plant (Epifagus virginiana) and experiments in tobacco indicate that it has an essential function which is probably not related to photosynthesis. This is Protein Ycf2 (ycf2-A) from Nicotiana tabacum (Common tobacco).